The following is a 423-amino-acid chain: Histidine--tRNA ligase (423 aa).

Belongs to the class-II aminoacyl-tRNA synthetase family. As to quaternary structure, homodimer.

Its subcellular location is the cytoplasm. The catalysed reaction is tRNA(His) + L-histidine + ATP = L-histidyl-tRNA(His) + AMP + diphosphate + H(+). The chain is Histidine--tRNA ligase from Orientia tsutsugamushi (strain Ikeda) (Rickettsia tsutsugamushi).